A 304-amino-acid polypeptide reads, in one-letter code: Tyrosine recombinase XerD (304 aa).

In terms of domain architecture, Core-binding (CB) spans 1-92 (MKARVLAKTW…VARGLHKFAL (92 aa)). The 186-residue stretch at 113 to 298 (HLPDTLSINE…TADSLREVWR (186 aa)) folds into the Tyr recombinase domain. Active-site residues include Arg-156, Lys-180, His-250, Arg-253, and His-276. Tyr-285 (O-(3'-phospho-DNA)-tyrosine intermediate) is an active-site residue.

This sequence belongs to the 'phage' integrase family. XerD subfamily. In terms of assembly, forms a cyclic heterotetrameric complex composed of two molecules of XerC and two molecules of XerD.

The protein resides in the cytoplasm. In terms of biological role, site-specific tyrosine recombinase, which acts by catalyzing the cutting and rejoining of the recombining DNA molecules. The XerC-XerD complex is essential to convert dimers of the bacterial chromosome into monomers to permit their segregation at cell division. It also contributes to the segregational stability of plasmids. This chain is Tyrosine recombinase XerD, found in Corynebacterium glutamicum (strain ATCC 13032 / DSM 20300 / JCM 1318 / BCRC 11384 / CCUG 27702 / LMG 3730 / NBRC 12168 / NCIMB 10025 / NRRL B-2784 / 534).